Consider the following 583-residue polypeptide: Kelch-like protein 35 (583 aa).

Residues 41 to 119 form the BTB domain; that stretch reads TDVVLRAGGR…VYGAGVRLRA (79 aa). In terms of domain architecture, BACK spans 146 to 248; sequence LEGRLRAANS…LEHVRLPLLA (103 aa). Kelch repeat units lie at residues 301–350, 352–394, 395–441, 443–489, 490–531, and 533–579; these read VIVV…ALRN, VYVS…VVQG, QLFA…SCAG, LFVI…SLED, TIYV…VCDG, and VHIL…TIIQ.

The chain is Kelch-like protein 35 (KLHL35) from Homo sapiens (Human).